We begin with the raw amino-acid sequence, 113 residues long: uncharacterized protein (113 aa).

Basic and acidic residues predominate over residues 1-19 (MDKKSAHRNPEDAKAGKYE). Residues 1–94 (MDKKSAHRNP…NKWRGKRKVS (94 aa)) are disordered. Positions 20 to 41 (GKHKRKKKRKQNQNQHRSRHRS) are enriched in basic residues. Over residues 52–66 (FPSSSSSSSGSQTDS) the composition is skewed to low complexity. Over residues 75 to 92 (KIKKKRREKTNKWRGKRK) the composition is skewed to basic residues.

This is an uncharacterized protein from Macaca fascicularis (Crab-eating macaque).